The following is a 372-amino-acid chain: Cytochrome b (372 aa).

Helical transmembrane passes span 25–45, 69–90, 105–125, and 170–190; these read FGSMLLTCLALQTSTGFFLAI, WIIQNLHAIGASMFFICIYTHI, WLSGTMLLIMLMATSFFGYVL, and FFALHFILPFMIISLSSIHII. Heme b-binding residues include His-75 and His-89. Residues His-174 and His-188 each coordinate heme b. His-193 contributes to the a ubiquinone binding site. Helical transmembrane passes span 218–238, 280–300, 312–332, and 339–358; these read YKDTLMITAMITSMLIIMSFM, LGGTLALLMSILILTTAPFTH, LTQIMFWTLIVTFITITWSAT, and FIFISQTASIIYFSFFIINP.

The protein belongs to the cytochrome b family. The cytochrome bc1 complex contains 3 respiratory subunits (MT-CYB, CYC1 and UQCRFS1), 2 core proteins (UQCRC1 and UQCRC2) and probably 6 low-molecular weight proteins. Heme b serves as cofactor.

The protein localises to the mitochondrion inner membrane. Its function is as follows. Component of the ubiquinol-cytochrome c reductase complex (complex III or cytochrome b-c1 complex) that is part of the mitochondrial respiratory chain. The b-c1 complex mediates electron transfer from ubiquinol to cytochrome c. Contributes to the generation of a proton gradient across the mitochondrial membrane that is then used for ATP synthesis. This is Cytochrome b (MT-CYB) from Hydrophis semperi (Lake Taal snake).